The sequence spans 211 residues: Small ribosomal subunit protein uS4 (211 aa).

The S4 RNA-binding domain occupies 99-160; that stretch reads RRLDSVVYQM…KSRNIQQVRE (62 aa).

This sequence belongs to the universal ribosomal protein uS4 family. As to quaternary structure, part of the 30S ribosomal subunit. Contacts protein S5. The interaction surface between S4 and S5 is involved in control of translational fidelity.

In terms of biological role, one of the primary rRNA binding proteins, it binds directly to 16S rRNA where it nucleates assembly of the body of the 30S subunit. Its function is as follows. With S5 and S12 plays an important role in translational accuracy. The chain is Small ribosomal subunit protein uS4 from Petrotoga mobilis (strain DSM 10674 / SJ95).